Reading from the N-terminus, the 563-residue chain is Choline transporter (563 aa).

Residues 1–25 (MSIRNDNASGGYMQPDQSSNASMHK) form a disordered region. Residues 1–57 (MSIRNDNASGGYMQPDQSSNASMHKRDLRVEEEIKPLDDMDSKGAVAADGEVHLRKS) are Extracellular-facing. Residues Asn7 and Asn20 are each glycosylated (N-linked (GlcNAc...) asparagine). Residues Ser22 and Ser42 each carry the phosphoserine modification. A helical membrane pass occupies residues 58–78 (FSLWSILGVGFGLTNSWFGIS). Residues 79 to 87 (TSMVAGISS) lie on the Cytoplasmic side of the membrane. A helical membrane pass occupies residues 88–108 (GGPMMIVYGIIIVALISICIG). The Extracellular segment spans residues 109-182 (TSLGELSSAY…LTHPEFIPKR (74 aa)). Residues 183–203 (WHIFVCFELLHLFLMFFNCYG) form a helical membrane-spanning segment. At 204 to 205 (KS) the chain is on the cytoplasmic side. A helical membrane pass occupies residues 206–226 (LPIISSSSLYISLLSFFTITI). At 227–255 (TVLACSHGKFNDAKFVFATFNNETGWKNG) the chain is on the extracellular side. An N-linked (GlcNAc...) asparagine glycan is attached at Asn248. Residues 256 to 276 (GIAFIVGLINPAWSFSCLDCA) traverse the membrane as a helical segment. Residues 277-293 (THMAFEVEKPERVIPIA) are Cytoplasmic-facing. Residues 294-314 (IMGTVAIGFVTSFCYVIAMFF) form a helical membrane-spanning segment. Topologically, residues 315–342 (SIQDLDAVLSSTTGAPILDIYNQALGNK) are extracellular. Asn341 is a glycosylation site (N-linked (GlcNAc...) asparagine). A helical membrane pass occupies residues 343–363 (SGAIFLGCLILFTSFGCVIAC). Residues 364–398 (HTWQARLCWSFARDNGLPLSRLWSQVNPHTGVPLN) are Cytoplasmic-facing. Residues 399 to 417 (AHLMSCAWITLIGLLYLAS) traverse the membrane as a helical segment. Residues 418-426 (STAFQSLIT) are Extracellular-facing. A helical membrane pass occupies residues 427 to 445 (GCIAFLLLSYIIPVICLLA). The Cytoplasmic segment spans residues 446–465 (KKRNIAHGPFWLGKFGFFSN). Residues 466–486 (IVLLGWTVFSVVFFSFPPVLP) form a helical membrane-spanning segment. Residues 487 to 491 (VTKDN) are Extracellular-facing. A helical membrane pass occupies residues 492–512 (MNYVCVVIVGYTAYSILYWKY). At 513–563 (KGKKEFHALEESENEQAEYSNNFDTIEDSREFSVAASDVELENEHVPWGKK) the chain is on the cytoplasmic side.

The protein belongs to the amino acid-polyamine-organocation (APC) superfamily. Amino acid/choline transporter (ACT) (TC 2.A.3.4) family.

The protein localises to the membrane. It carries out the reaction choline(out) = choline(in). It catalyses the reaction ethanolamine(in) = ethanolamine(out). Sole choline transporter in yeast. Also transports ethanolamine. This chain is Choline transporter (HNM1), found in Saccharomyces cerevisiae (strain ATCC 204508 / S288c) (Baker's yeast).